Here is a 300-residue protein sequence, read N- to C-terminus: Cell surface glycoprotein CD200 receptor 1-A (300 aa).

Positions methionine 1–glycine 24 are cleaved as a signal peptide. Positions isoleucine 25–threonine 124 constitute an Ig-like V-type domain. Topologically, residues isoleucine 25 to aspartate 213 are extracellular. 2 disulfides stabilise this stretch: cysteine 40–cysteine 108 and cysteine 143–cysteine 192. 6 N-linked (GlcNAc...) asparagine glycosylation sites follow: asparagine 45, asparagine 76, asparagine 105, asparagine 171, asparagine 200, and asparagine 206. Residues histidine 122–asparagine 206 enclose the Ig-like C2-type domain. The chain crosses the membrane as a helical span at residues leucine 214–isoleucine 234. Topologically, residues tyrosine 235–threonine 300 are cytoplasmic.

This sequence belongs to the CD200R family. In terms of processing, glycosylated. Post-translationally, phosphorylated. As to expression, highly expressed in macrophages, peripheral blood lymphocytes (PBL) and peripheral blood mononuclear cells (PBMC). Weakly expressed in bursa, thymus, spleen, liver and brain.

The protein localises to the membrane. The protein resides in the secreted. The polypeptide is Cell surface glycoprotein CD200 receptor 1-A (CD200R1A) (Gallus gallus (Chicken)).